We begin with the raw amino-acid sequence, 189 residues long: Peptidyl-tRNA hydrolase (189 aa).

Tyr-15 contributes to the tRNA binding site. The Proton acceptor role is filled by His-20. TRNA contacts are provided by Tyr-64, Asn-66, and Asn-112.

It belongs to the PTH family. Monomer.

The protein resides in the cytoplasm. It carries out the reaction an N-acyl-L-alpha-aminoacyl-tRNA + H2O = an N-acyl-L-amino acid + a tRNA + H(+). Its function is as follows. Hydrolyzes ribosome-free peptidyl-tRNAs (with 1 or more amino acids incorporated), which drop off the ribosome during protein synthesis, or as a result of ribosome stalling. Functionally, catalyzes the release of premature peptidyl moieties from peptidyl-tRNA molecules trapped in stalled 50S ribosomal subunits, and thus maintains levels of free tRNAs and 50S ribosomes. The sequence is that of Peptidyl-tRNA hydrolase from Sulfurihydrogenibium sp. (strain YO3AOP1).